The primary structure comprises 154 residues: uncharacterized protein (154 aa).

In terms of domain architecture, HTH marR-type spans 1-143 (MTESERALLT…LRKLAGSLTK (143 aa)). The H-T-H motif DNA-binding region spans 57 to 80 (LSKLAMSLDLKPASVTRMTDILYK).

This is an uncharacterized protein from Bacillus subtilis (strain 168).